A 286-amino-acid chain; its full sequence is MRKDEIMHIVSCADDNYARHLGGMFVSLLTNMDQEREVKLYVIDGGIKPDNKKRLEETTLKFGVPIEFLEVDTNMYEHAVESSHITKAAYYRISIPDLIKDESIKRMIYIDCDALVLEDISKLWDLDIAPYTVAAVEDAGQHERLKEMNVTDTGKYFNSGIMIIDFESWRKQNITEKVINFINEHPDEDFLVLHDQDALNAILYDQWYELHPRWNAQTYIMLKLKTPSTLLGRKQYNETRENPAIVHFCGGEKPWNSNTKHPYRDEYFHYMSYTKWNTIGNPAINQ.

UDP contacts are provided by residues 12–17 (CADDNY) and 111–112 (DC). Mn(2+) contacts are provided by D111, D113, and H247. 247–253 (HFCGGEK) contacts UDP.

Belongs to the glycosyltransferase 8 family.

This is General stress protein A (gspA) from Bacillus subtilis (strain 168).